Consider the following 490-residue polypeptide: MADNQTTAAEPTNGRVTRVQGSVIDVEFPVGHLPDIYNALKVTIVNTSAKEEGEAKETEITLEVEQHLGDSTVRCVALKPTDGLVRGASVSDTGAPISVPVGDVTKGHVFDVSGNILNKKPDETITVSERWPIHRNPPAFDQLESKTQMFETGIKVIDLLTPYVQGGKIGLFGGAGVGKTVLIQEMIQRVAQNHGGVSVFAGVGERTREGNDLIGEMAEAGVLEKTALVFGQMDEQPGTRLRVPLTALTMAEYFRDVQNQDVLLFIDNIFRFTQAGSEVSTLLGRMPSAVGYQPNLADEMGSLQERITSTRGHSITSLQAIYVPADDYTDPAPATTFAHLDATTELSRDIASKGIYPAVDPLSSTSRILDPRYVGQAHYDCANRVKAILQRNKELQDIIALIGIDELGEEDKTTVNRARKIEQFLGQNFYVAEKFTGRPGSYVPADETIEAFTRICDGVYDDVPEQAFSGIGGIDDLEEKWHNMQKELGA.

173-180 contacts ATP; that stretch reads GGAGVGKT.

The protein belongs to the ATPase alpha/beta chains family. As to quaternary structure, F-type ATPases have 2 components, CF(1) - the catalytic core - and CF(0) - the membrane proton channel. CF(1) has five subunits: alpha(3), beta(3), gamma(1), delta(1), epsilon(1). CF(0) has three main subunits: a(1), b(2) and c(9-12). The alpha and beta chains form an alternating ring which encloses part of the gamma chain. CF(1) is attached to CF(0) by a central stalk formed by the gamma and epsilon chains, while a peripheral stalk is formed by the delta and b chains.

The protein resides in the cell membrane. The catalysed reaction is ATP + H2O + 4 H(+)(in) = ADP + phosphate + 5 H(+)(out). Produces ATP from ADP in the presence of a proton gradient across the membrane. The catalytic sites are hosted primarily by the beta subunits. The sequence is that of ATP synthase subunit beta from Bifidobacterium longum (strain DJO10A).